A 153-amino-acid polypeptide reads, in one-letter code: 6,7-dimethyl-8-ribityllumazine synthase (153 aa).

Residues F22, 56–58 (AFE), and 80–82 (TVI) each bind 5-amino-6-(D-ribitylamino)uracil. 85-86 (ST) serves as a coordination point for (2S)-2-hydroxy-3-oxobutyl phosphate. The active-site Proton donor is H88. Position 113 (F113) interacts with 5-amino-6-(D-ribitylamino)uracil. Position 127 (R127) interacts with (2S)-2-hydroxy-3-oxobutyl phosphate.

It belongs to the DMRL synthase family. As to quaternary structure, forms an icosahedral capsid composed of 60 subunits, arranged as a dodecamer of pentamers.

The catalysed reaction is (2S)-2-hydroxy-3-oxobutyl phosphate + 5-amino-6-(D-ribitylamino)uracil = 6,7-dimethyl-8-(1-D-ribityl)lumazine + phosphate + 2 H2O + H(+). The protein operates within cofactor biosynthesis; riboflavin biosynthesis; riboflavin from 2-hydroxy-3-oxobutyl phosphate and 5-amino-6-(D-ribitylamino)uracil: step 1/2. Its function is as follows. Catalyzes the formation of 6,7-dimethyl-8-ribityllumazine by condensation of 5-amino-6-(D-ribitylamino)uracil with 3,4-dihydroxy-2-butanone 4-phosphate. This is the penultimate step in the biosynthesis of riboflavin. The polypeptide is 6,7-dimethyl-8-ribityllumazine synthase (Glaesserella parasuis serovar 5 (strain SH0165) (Haemophilus parasuis)).